Consider the following 493-residue polypeptide: GTPase Der (493 aa).

2 EngA-type G domains span residues 3–166 and 206–379; these read PVVA…AEAL and IKLA…KSAT. GTP contacts are provided by residues 9 to 16, 56 to 60, 118 to 121, 212 to 219, 259 to 263, and 324 to 327; these read GRPNVGKS, DTGGI, NKVD, DTAGV, and NKWD. Positions 380–464 constitute a KH-like domain; it reads TRVGTSVLTR…PIRIQFQNSE (85 aa).

This sequence belongs to the TRAFAC class TrmE-Era-EngA-EngB-Septin-like GTPase superfamily. EngA (Der) GTPase family. In terms of assembly, associates with the 50S ribosomal subunit.

Functionally, GTPase that plays an essential role in the late steps of ribosome biogenesis. This chain is GTPase Der, found in Vibrio atlanticus (strain LGP32) (Vibrio splendidus (strain Mel32)).